We begin with the raw amino-acid sequence, 744 residues long: Integrator complex subunit 11 homolog (744 aa).

His67, His69, Asp71, His72, His156, and Asp177 together coordinate Zn(2+). Positions 67–72 (HFHLDH) match the HXHXDH motif motif. Residue Glu202 is part of the active site. His425 contacts Zn(2+). Residues 626–669 (NNNTSDDNNNNNNNNNNNNNNNNNNNNNNNNNNNNNNNNNNNNN) are disordered.

It belongs to the metallo-beta-lactamase superfamily. RNA-metabolizing metallo-beta-lactamase-like family. INTS11 subfamily. In terms of assembly, component of the Integrator complex. The core complex associates with protein phosphatase 2A subunits, to form the Integrator-PP2A (INTAC) complex. The cofactor is Zn(2+).

Its subcellular location is the nucleus. The protein localises to the cytoplasm. In terms of biological role, RNA endonuclease component of the integrator complex, a multiprotein complex that terminates RNA polymerase II (Pol II) transcription in the promoter-proximal region of genes. The integrator complex provides a quality checkpoint during transcription elongation by driving premature transcription termination of transcripts that are unfavorably configured for transcriptional elongation: the complex terminates transcription by (1) catalyzing dephosphorylation of the C-terminal domain (CTD) of Pol II subunit polr2a, (2) degrading the exiting nascent RNA transcript via endonuclease activity and (3) promoting the release of Pol II from bound DNA. The integrator complex is also involved in terminating the synthesis of non-coding Pol II transcripts, such as enhancer RNAs (eRNAs), small nuclear RNAs (snRNAs), telomerase RNAs and long non-coding RNAs (lncRNAs). Within the integrator complex, INTS11 constitutes the RNA endonuclease subunit that degrades exiting nascent RNA transcripts. The sequence is that of Integrator complex subunit 11 homolog (ints11) from Dictyostelium discoideum (Social amoeba).